A 493-amino-acid polypeptide reads, in one-letter code: Cytochrome P450 2A9 (493 aa).

Cys438 serves as a coordination point for heme.

It belongs to the cytochrome P450 family. Heme is required as a cofactor. In terms of tissue distribution, liver.

The protein resides in the endoplasmic reticulum membrane. Its subcellular location is the microsome membrane. The catalysed reaction is an organic molecule + reduced [NADPH--hemoprotein reductase] + O2 = an alcohol + oxidized [NADPH--hemoprotein reductase] + H2O + H(+). In terms of biological role, cytochromes P450 are a group of heme-thiolate monooxygenases. In liver microsomes, this enzyme is involved in an NADPH-dependent electron transport pathway. It oxidizes a variety of structurally unrelated compounds, including steroids, fatty acids, and xenobiotics. In Mesocricetus auratus (Golden hamster), this protein is Cytochrome P450 2A9 (CYP2A9).